Consider the following 653-residue polypeptide: Putative clathrin assembly protein At2g25430 (653 aa).

The 137-residue stretch at 23 to 159 folds into the ENTH domain; sequence VASNMAPDLE…ELALFERKSG (137 aa). Positions 160-171 are enriched in low complexity; the sequence is VSVNSGGNSSHH. The interval 160–240 is disordered; the sequence is VSVNSGGNSS…GGGGGGRDEK (81 aa). Basic and acidic residues predominate over residues 172–186; the sequence is SNNDDRYGRGRDDFR. Residues 197–214 show a composition bias toward gly residues; sequence NGGGGGSDFRGDNNGYGG. Residue Ser221 is modified to Phosphoserine. Thr244 is subject to Phosphothreonine. Residues 376 to 389 are compositionally biased toward basic and acidic residues; it reads RAKRGKSPERKEIE. The disordered stretch occupies residues 376-431; sequence RAKRGKSPERKEIEAPPPVVEEEEPEPDMNEIKALPPPENYTPPPPPEPEPQPEKP. A compositionally biased stretch (acidic residues) spans 395–404; that stretch reads VEEEEPEPDM. The segment covering 410 to 425 has biased composition (pro residues); sequence LPPPENYTPPPPPEPE.

Its subcellular location is the membrane. The protein localises to the clathrin-coated pit. It is found in the golgi apparatus. It localises to the cytoplasmic vesicle. The protein resides in the clathrin-coated vesicle. The protein is Putative clathrin assembly protein At2g25430 of Arabidopsis thaliana (Mouse-ear cress).